The sequence spans 441 residues: Ubiquitin carboxyl-terminal hydrolase MINDY-3 (441 aa).

C51 functions as the Nucleophile in the catalytic mechanism. The active-site Proton acceptor is the H284.

This sequence belongs to the MINDY deubiquitinase family. FAM188 subfamily.

It localises to the nucleus. The catalysed reaction is Thiol-dependent hydrolysis of ester, thioester, amide, peptide and isopeptide bonds formed by the C-terminal Gly of ubiquitin (a 76-residue protein attached to proteins as an intracellular targeting signal).. Hydrolase that can remove 'Lys-48'-linked conjugated ubiquitin from proteins. This Xenopus tropicalis (Western clawed frog) protein is Ubiquitin carboxyl-terminal hydrolase MINDY-3 (mindy3).